The sequence spans 574 residues: 2-succinyl-5-enolpyruvyl-6-hydroxy-3-cyclohexene-1-carboxylate synthase (574 aa).

Belongs to the TPP enzyme family. MenD subfamily. Homodimer. The cofactor is Mg(2+). It depends on Mn(2+) as a cofactor. Requires thiamine diphosphate as cofactor.

It catalyses the reaction isochorismate + 2-oxoglutarate + H(+) = 5-enolpyruvoyl-6-hydroxy-2-succinyl-cyclohex-3-ene-1-carboxylate + CO2. Its pathway is quinol/quinone metabolism; 1,4-dihydroxy-2-naphthoate biosynthesis; 1,4-dihydroxy-2-naphthoate from chorismate: step 2/7. It participates in quinol/quinone metabolism; menaquinone biosynthesis. Catalyzes the thiamine diphosphate-dependent decarboxylation of 2-oxoglutarate and the subsequent addition of the resulting succinic semialdehyde-thiamine pyrophosphate anion to isochorismate to yield 2-succinyl-5-enolpyruvyl-6-hydroxy-3-cyclohexene-1-carboxylate (SEPHCHC). In Vibrio atlanticus (strain LGP32) (Vibrio splendidus (strain Mel32)), this protein is 2-succinyl-5-enolpyruvyl-6-hydroxy-3-cyclohexene-1-carboxylate synthase.